A 336-amino-acid chain; its full sequence is tRNA-cytidine(32) 2-sulfurtransferase (336 aa).

Residues 11 to 23 (TAAAPAGTGEATP) are compositionally biased toward low complexity. Residues 11–31 (TAAAPAGTGEATPVHARARSP) are disordered. Positions 75-80 (SGGKDS) match the PP-loop motif motif. The [4Fe-4S] cluster site is built by Cys150, Cys153, and Cys241.

This sequence belongs to the TtcA family. As to quaternary structure, homodimer. It depends on Mg(2+) as a cofactor. Requires [4Fe-4S] cluster as cofactor.

Its subcellular location is the cytoplasm. The catalysed reaction is cytidine(32) in tRNA + S-sulfanyl-L-cysteinyl-[cysteine desulfurase] + AH2 + ATP = 2-thiocytidine(32) in tRNA + L-cysteinyl-[cysteine desulfurase] + A + AMP + diphosphate + H(+). It functions in the pathway tRNA modification. Functionally, catalyzes the ATP-dependent 2-thiolation of cytidine in position 32 of tRNA, to form 2-thiocytidine (s(2)C32). The sulfur atoms are provided by the cysteine/cysteine desulfurase (IscS) system. This Paraburkholderia xenovorans (strain LB400) protein is tRNA-cytidine(32) 2-sulfurtransferase.